A 443-amino-acid polypeptide reads, in one-letter code: Glutamate-1-semialdehyde 2,1-aminomutase (443 aa).

Lys-277 carries the N6-(pyridoxal phosphate)lysine modification.

Belongs to the class-III pyridoxal-phosphate-dependent aminotransferase family. HemL subfamily. In terms of assembly, homodimer. Pyridoxal 5'-phosphate is required as a cofactor.

The protein resides in the cytoplasm. The catalysed reaction is (S)-4-amino-5-oxopentanoate = 5-aminolevulinate. It participates in porphyrin-containing compound metabolism; protoporphyrin-IX biosynthesis; 5-aminolevulinate from L-glutamyl-tRNA(Glu): step 2/2. This chain is Glutamate-1-semialdehyde 2,1-aminomutase, found in Pseudarthrobacter chlorophenolicus (strain ATCC 700700 / DSM 12829 / CIP 107037 / JCM 12360 / KCTC 9906 / NCIMB 13794 / A6) (Arthrobacter chlorophenolicus).